An 89-amino-acid chain; its full sequence is Small ribosomal subunit protein uS15 (89 aa).

Belongs to the universal ribosomal protein uS15 family. In terms of assembly, part of the 30S ribosomal subunit. Forms a bridge to the 50S subunit in the 70S ribosome, contacting the 23S rRNA.

Functionally, one of the primary rRNA binding proteins, it binds directly to 16S rRNA where it helps nucleate assembly of the platform of the 30S subunit by binding and bridging several RNA helices of the 16S rRNA. Forms an intersubunit bridge (bridge B4) with the 23S rRNA of the 50S subunit in the ribosome. This Trichormus variabilis (strain ATCC 29413 / PCC 7937) (Anabaena variabilis) protein is Small ribosomal subunit protein uS15.